The primary structure comprises 336 residues: Ferredoxin--NADP reductase (336 aa).

Aspartate 37, glutamine 45, tyrosine 50, valine 90, phenylalanine 124, aspartate 286, and threonine 327 together coordinate FAD.

It belongs to the ferredoxin--NADP reductase type 2 family. As to quaternary structure, homodimer. Requires FAD as cofactor.

The catalysed reaction is 2 reduced [2Fe-2S]-[ferredoxin] + NADP(+) + H(+) = 2 oxidized [2Fe-2S]-[ferredoxin] + NADPH. This Enterococcus faecalis (strain ATCC 700802 / V583) protein is Ferredoxin--NADP reductase.